Reading from the N-terminus, the 280-residue chain is 3-methyl-2-oxobutanoate hydroxymethyltransferase (280 aa).

Residues aspartate 49 and aspartate 88 each contribute to the Mg(2+) site. Residues 49 to 50 (DS), aspartate 88, and lysine 118 each bind 3-methyl-2-oxobutanoate. A Mg(2+)-binding site is contributed by glutamate 120. Catalysis depends on glutamate 186, which acts as the Proton acceptor.

Belongs to the PanB family. In terms of assembly, homodecamer; pentamer of dimers. Requires Mg(2+) as cofactor.

The protein resides in the cytoplasm. It catalyses the reaction 3-methyl-2-oxobutanoate + (6R)-5,10-methylene-5,6,7,8-tetrahydrofolate + H2O = 2-dehydropantoate + (6S)-5,6,7,8-tetrahydrofolate. The protein operates within cofactor biosynthesis; (R)-pantothenate biosynthesis; (R)-pantoate from 3-methyl-2-oxobutanoate: step 1/2. Catalyzes the reversible reaction in which hydroxymethyl group from 5,10-methylenetetrahydrofolate is transferred onto alpha-ketoisovalerate to form ketopantoate. The polypeptide is 3-methyl-2-oxobutanoate hydroxymethyltransferase (Ruegeria sp. (strain TM1040) (Silicibacter sp.)).